The primary structure comprises 324 residues: Glyoxylate/hydroxypyruvate reductase B (324 aa).

Residues Arg237 and Glu266 contribute to the active site. The active-site Proton donor is His285.

The protein belongs to the D-isomer specific 2-hydroxyacid dehydrogenase family. GhrB subfamily. In terms of assembly, homodimer.

It localises to the cytoplasm. The catalysed reaction is glycolate + NADP(+) = glyoxylate + NADPH + H(+). The enzyme catalyses (R)-glycerate + NAD(+) = 3-hydroxypyruvate + NADH + H(+). It carries out the reaction (R)-glycerate + NADP(+) = 3-hydroxypyruvate + NADPH + H(+). Functionally, catalyzes the NADPH-dependent reduction of glyoxylate and hydroxypyruvate into glycolate and glycerate, respectively. The protein is Glyoxylate/hydroxypyruvate reductase B of Shigella boydii serotype 18 (strain CDC 3083-94 / BS512).